A 453-amino-acid chain; its full sequence is UDP-N-acetylmuramoylalanine--D-glutamate ligase (453 aa).

Residue 119–125 participates in ATP binding; the sequence is GSNGKTT.

The protein belongs to the MurCDEF family.

It is found in the cytoplasm. The catalysed reaction is UDP-N-acetyl-alpha-D-muramoyl-L-alanine + D-glutamate + ATP = UDP-N-acetyl-alpha-D-muramoyl-L-alanyl-D-glutamate + ADP + phosphate + H(+). It participates in cell wall biogenesis; peptidoglycan biosynthesis. Its function is as follows. Cell wall formation. Catalyzes the addition of glutamate to the nucleotide precursor UDP-N-acetylmuramoyl-L-alanine (UMA). This is UDP-N-acetylmuramoylalanine--D-glutamate ligase from Streptococcus uberis (strain ATCC BAA-854 / 0140J).